We begin with the raw amino-acid sequence, 264 residues long: 1-(5-phosphoribosyl)-5-[(5-phosphoribosylamino)methylideneamino] imidazole-4-carboxamide isomerase (264 aa).

This sequence belongs to the HisA/HisF family.

Its subcellular location is the cytoplasm. The catalysed reaction is 1-(5-phospho-beta-D-ribosyl)-5-[(5-phospho-beta-D-ribosylamino)methylideneamino]imidazole-4-carboxamide = 5-[(5-phospho-1-deoxy-D-ribulos-1-ylimino)methylamino]-1-(5-phospho-beta-D-ribosyl)imidazole-4-carboxamide. It participates in amino-acid biosynthesis; L-histidine biosynthesis; L-histidine from 5-phospho-alpha-D-ribose 1-diphosphate: step 4/9. This chain is 1-(5-phosphoribosyl)-5-[(5-phosphoribosylamino)methylideneamino] imidazole-4-carboxamide isomerase (HIS6), found in Yarrowia lipolytica (strain CLIB 122 / E 150) (Yeast).